The chain runs to 191 residues: MEPIRVIESRTVVLPRENVDTDQIIPARFLKVTDKKGLGKALFSDWRYAADGAPRPDFVMNRPEAQGCSILVAGDNFGCGSSREHAPWALVDAGVRAVISTRIADIFRNNALKNGLVPVVLDAASHAKLLAAPGASVRVDVEAQTVTLPDGSTAQFPLDGFARYCLLNGVDELGFLLAQEADIAAFEGGRR.

The protein belongs to the LeuD family. LeuD type 1 subfamily. As to quaternary structure, heterodimer of LeuC and LeuD.

It catalyses the reaction (2R,3S)-3-isopropylmalate = (2S)-2-isopropylmalate. It functions in the pathway amino-acid biosynthesis; L-leucine biosynthesis; L-leucine from 3-methyl-2-oxobutanoate: step 2/4. Catalyzes the isomerization between 2-isopropylmalate and 3-isopropylmalate, via the formation of 2-isopropylmaleate. The chain is 3-isopropylmalate dehydratase small subunit from Anaeromyxobacter dehalogenans (strain 2CP-1 / ATCC BAA-258).